Consider the following 189-residue polypeptide: Ras-like protein 1 (189 aa).

10–17 provides a ligand contact to GTP; that stretch reads GGGGVGKS. The Effector region signature appears at 32-40; sequence YDPTIEDSY. Residues 57 to 61 and 116 to 119 each bind GTP; these read DTAGQ and NKCD. At C186 the chain carries Cysteine methyl ester. C186 is lipidated: S-geranylgeranyl cysteine. The propeptide at 187 to 189 is removed in mature form; sequence LLL.

This sequence belongs to the small GTPase superfamily. Ras family.

It localises to the cell membrane. The catalysed reaction is GTP + H2O = GDP + phosphate + H(+). In terms of biological role, ras proteins bind GDP/GTP and possess intrinsic GTPase activity. In Physarum polycephalum (Slime mold), this protein is Ras-like protein 1 (RAS1).